The following is a 318-amino-acid chain: MWKYGQNQGNQGPSSGGGGGGGPNMMPMGGFGMQHGNMQQMHMSPQHQQQQQQMGMMGGPGSMQMNPQGPGGPGGLMPGMSPQHQMQQQQQQQMMQQQMMVPQQGVGVGVGMGGGVGMGGGGVVPQQQQQQPQQNMPQQNIPQQQQQLNPVAGIPPGGAGGSNNMLAISQQNPHKEINIVQLSRLGQETVQDIASRFQEVFASLKGIQPTSHRENSSEKKVQEYFRTIRLLFKRVRIIYEKCNDAGMDYMSAESLIPYRDEPEPRIEPSLCDEYRKVLQENHELIETVKLKNRQLREIIDRTRIIIWEINTMLAMRRS.

Positions 1–13 (MWKYGQNQGNQGP) are enriched in low complexity. 2 disordered regions span residues 1–92 (MWKY…QQQQ) and 120–142 (GGGV…QNIP). Residues 14-33 (SSGGGGGGGPNMMPMGGFGM) are compositionally biased toward gly residues. Composition is skewed to low complexity over residues 34–55 (QHGN…QQMG), 78–92 (PGMS…QQQQ), and 124–142 (VPQQ…QNIP).

It belongs to the Mediator complex subunit 30 family. As to quaternary structure, component of the Mediator complex, which includes at least CDK8, MED4, MED6, MED11, MED14, MED17, MED18, MED20, MED21, MED22, MED27, MED28, MED30 and MED31.

Its subcellular location is the nucleus. In terms of biological role, component of the Mediator complex, a coactivator involved in the regulated transcription of nearly all RNA polymerase II-dependent genes. Mediator functions as a bridge to convey information from gene-specific regulatory proteins to the basal RNA polymerase II transcription machinery. Mediator is recruited to promoters by direct interactions with regulatory proteins and serves as a scaffold for the assembly of a functional preinitiation complex with RNA polymerase II and the general transcription factors. This Drosophila melanogaster (Fruit fly) protein is Mediator of RNA polymerase II transcription subunit 30 (MED30).